The following is a 985-amino-acid chain: Alpha-glucosidase (985 aa).

The N-terminal stretch at 1–25 is a signal peptide; sequence MVKLTHLLARAWLVPLAYGASQSLL. Residue T36 is glycosylated (O-linked (Man) threonine). N-linked (GlcNAc...) asparagine glycans are attached at residues N124, N143, N218, N347, and N422. D490 functions as the Nucleophile in the catalytic mechanism. E493 is an active-site residue. N-linked (GlcNAc...) asparagine glycans are attached at residues N506, N534, and N537. S545 and S550 each carry an O-linked (Man) serine glycan. O-linked (Man) threonine glycosylation occurs at T559. Residue S560 is glycosylated (O-linked (Man) serine). T561 is a glycosylation site (O-linked (Man) threonine). O-linked (Man) serine glycosylation occurs at S562. An O-linked (Man) threonine glycan is attached at T571. N601 and N623 each carry an N-linked (GlcNAc...) asparagine glycan. The active-site Proton donor is the D660. N-linked (GlcNAc...) asparagine glycans are attached at residues N835 and N881. S895 is a glycosylation site (O-linked (Man) serine). N-linked (GlcNAc...) asparagine glycosylation is found at N899, N957, and N970.

The protein belongs to the glycosyl hydrolase 31 family. The O-linked saccharide is not identified, but is probably mannose.

It carries out the reaction Hydrolysis of terminal, non-reducing (1-&gt;4)-linked alpha-D-glucose residues with release of alpha-D-glucose.. In terms of biological role, hydrolyzes malto-oligosaccharides, but has a low activity toward soluble starch. The polypeptide is Alpha-glucosidase (aglA) (Aspergillus niger).